The sequence spans 449 residues: Aminopeptidase C (449 aa).

Catalysis depends on residues Cys70, His364, and Asn385.

Belongs to the peptidase C1 family. As to quaternary structure, homohexamer.

The protein localises to the cytoplasm. It catalyses the reaction Inactivates bleomycin B2 (a cytotoxic glycometallopeptide) by hydrolysis of a carboxyamide bond of beta-aminoalanine, but also shows general aminopeptidase activity. The specificity varies somewhat with source, but amino acid arylamides of Met, Leu and Ala are preferred.. This Lactobacillus helveticus (Lactobacillus suntoryeus) protein is Aminopeptidase C (pepC).